A 358-amino-acid polypeptide reads, in one-letter code: Protein RecA (358 aa).

66–73 (GPESSGKT) provides a ligand contact to ATP.

This sequence belongs to the RecA family.

It is found in the cytoplasm. Can catalyze the hydrolysis of ATP in the presence of single-stranded DNA, the ATP-dependent uptake of single-stranded DNA by duplex DNA, and the ATP-dependent hybridization of homologous single-stranded DNAs. It interacts with LexA causing its activation and leading to its autocatalytic cleavage. The protein is Protein RecA of Herpetosiphon aurantiacus (strain ATCC 23779 / DSM 785 / 114-95).